The sequence spans 742 residues: Mechanosensitive ion channel protein 9 (742 aa).

Positions Met1–Arg117 are disordered. Residues Ser17–Arg26 are compositionally biased toward basic and acidic residues. A phosphoserine mark is found at Ser28 and Ser36. The segment covering Asp105–Arg117 has biased composition (basic and acidic residues). Phosphoserine is present on residues Ser142 and Ser145. 6 helical membrane-spanning segments follow: residues Ala180 to Ile200, Met221 to Ile241, Asn261 to Gly281, Phe292 to Val312, Leu524 to Ala544, and Leu559 to Val579.

It belongs to the MscS (TC 1.A.23) family. As to expression, detected in the epidermis, cortex, and endodermis of the root tip.

The protein localises to the cell membrane. Mechanosensitive channel that opens in response to stretch forces in the membrane lipid bilayer. The sequence is that of Mechanosensitive ion channel protein 9 (MSL9) from Arabidopsis thaliana (Mouse-ear cress).